The primary structure comprises 836 residues: Serine/threonine-protein kinase 1 (836 aa).

The span at 1–12 (MDHNSPKSRRSR) shows a compositional bias: basic residues. The segment at 1-244 (MDHNSPKSRR…SLPDSITRED (244 aa)) is disordered. Over residues 28-40 (SDSDSDQGRDRDK) the composition is skewed to basic and acidic residues. Acidic residues-rich tracts occupy residues 64-75 (DGEGEEDDDDDS), 95-105 (DYDDDDGDESG), and 145-163 (EESS…DDGD). The segment covering 224–238 (MQQQNSKMSTTSLPD) has biased composition (polar residues). One can recognise a Protein kinase domain in the interval 249–503 (YEFLNELGKG…AAEMLKHKFV (255 aa)). ATP is bound by residues 255–263 (LGKGSYGSV) and K278. Residue D371 is the Proton acceptor of the active site. 3 disordered regions span residues 539–571 (LEDT…APLT), 600–640 (EDET…DSWI), and 760–780 (TSSD…PLPP). The segment covering 562 to 571 (PQNSTEAPLT) has biased composition (polar residues). Residues 606–618 (SDSRSQLVREKES) are compositionally biased toward basic and acidic residues.

It belongs to the protein kinase superfamily. STE Ser/Thr protein kinase family. STE20 subfamily. As to quaternary structure, interacts with MOB1A and MOB1B via its N-terminal region at the plasma membrane and in the nucleus. Binds to BIK1 to phosphorylate and stabilize it. Interacts with and phosphorylates RBOHD upon flagellin perception to activate it. The cofactor is Mn(2+). In terms of processing, autophosphorylates. In terms of tissue distribution, mostly expressed in mature tissues of roots, shoots, hypocotyls, cotyledons, stems, leaves and flowers, as well as in the shoot apical meristem (SAM).

It is found in the cell membrane. It localises to the nucleus. Its subcellular location is the golgi apparatus. The protein resides in the trans-Golgi network. The protein localises to the early endosome. It catalyses the reaction L-seryl-[protein] + ATP = O-phospho-L-seryl-[protein] + ADP + H(+). The enzyme catalyses L-threonyl-[protein] + ATP = O-phospho-L-threonyl-[protein] + ADP + H(+). In terms of biological role, serine/threonine-protein kinase. Regulates organ size in coordination with MOB1A by modulating cell proliferation and cell expansion, possibly by facilitating cell cycle exit. Positive regulator of the pathogen-associated molecular pattern (PAMP, e.g. flg22)-triggered immunity (PTI) signaling by stabilizing BIK1 and activating RBOHD by phosphorylation to promote the extracellular reactive oxygen species (ROS) burst involved in defense responses to bacterial infection. The polypeptide is Serine/threonine-protein kinase 1 (Arabidopsis thaliana (Mouse-ear cress)).